A 144-amino-acid polypeptide reads, in one-letter code: Bacilliredoxin BCE_2233 (144 aa).

It belongs to the bacilliredoxin family.

In Bacillus cereus (strain ATCC 10987 / NRS 248), this protein is Bacilliredoxin BCE_2233.